The chain runs to 951 residues: PE-PGRS family protein PE_PGRS3 (951 aa).

One can recognise a PE domain in the interval 4-94; the sequence is VIAAPEVIAA…GAYAAAEAAA (91 aa). Over residues 887–919 the composition is skewed to basic residues; that stretch reads CRRQRRADRQRRQRRQRRQSRGHARCRRHRRAA. Residues 887–951 are disordered; it reads CRRQRRADRQ…GISCSPQMMP (65 aa).

The protein belongs to the mycobacterial PE family. PGRS subfamily.

Its subcellular location is the cell outer membrane. The protein localises to the secreted. It is found in the cell wall. It localises to the cell surface. The arginine-rich C-terminal region protrudes from the mycobacterial membrane and mediates M.tuberculosis entry into host epithelial cells. May serve as a bridge between mycobacteria and host cells by interacting with specific host phospholipids and extracting them from host cells, for their direct integration or as a source of phosphate, during phases of TB pathogenesis when M.tuberculosis is short of phosphate supply. In Mycobacterium tuberculosis (strain CDC 1551 / Oshkosh), this protein is PE-PGRS family protein PE_PGRS3 (PE_PGRS3).